The chain runs to 494 residues: UDP-glucose 6-dehydrogenase (494 aa).

Residues 11–16 (GAGYVG), D36, R41, and 89–93 (VNTPT) contribute to the NAD(+) site. A disordered region spans residues 88–110 (SVNTPTKTYGMGKGRAADLKYIE). K107 carries the post-translational modification N6-acetyllysine. The tract at residues 129–135 (KSTVPVR) is allosteric switch region. 130-132 (STV) is an NAD(+) binding site. Residue E161 is the Proton donor/acceptor of the active site. Substrate is bound by residues 161–165 (EFLAE), 220–224 (KLAAN), R260, and 267–273 (KASVGFG). E165 serves as a coordination point for NAD(+). K220 functions as the Proton donor/acceptor in the catalytic mechanism. The Nucleophile role is filled by C276. Residue 276-279 (CFQK) coordinates NAD(+). An important for formation of active hexamer structure region spans residues 321–325 (SLFNT). 338 to 339 (FK) is a binding site for substrate. NAD(+) is bound at residue R346. R442 lines the substrate pocket. The disordered stretch occupies residues 466-494 (VSSKRIPYAPSGEIPKFSLQDPPNKKPKV). S476 is modified (phosphoserine).

This sequence belongs to the UDP-glucose/GDP-mannose dehydrogenase family. Homohexamer.

The enzyme catalyses UDP-alpha-D-glucose + 2 NAD(+) + H2O = UDP-alpha-D-glucuronate + 2 NADH + 3 H(+). It functions in the pathway nucleotide-sugar biosynthesis; UDP-alpha-D-glucuronate biosynthesis; UDP-alpha-D-glucuronate from UDP-alpha-D-glucose: step 1/1. UDP-alpha-D-xylose (UDX) acts as a feedback inhibitor. It binds at the same site as the substrate, but functions as allosteric inhibitor by triggering a conformation change that disrupts the active hexameric ring structure and gives rise to an inactive, horseshoe-shaped hexamer. Functionally, catalyzes the formation of UDP-alpha-D-glucuronate, a constituent of complex glycosaminoglycans. Required for the biosynthesis of chondroitin sulfate and heparan sulfate. Required for embryonic development via its role in the biosynthesis of glycosaminoglycans. Required for proper brain and neuronal development. The protein is UDP-glucose 6-dehydrogenase (UGDH) of Pongo abelii (Sumatran orangutan).